A 308-amino-acid polypeptide reads, in one-letter code: Tetraacyldisaccharide 4'-kinase (308 aa).

63–70 is an ATP binding site; it reads SFGGNGKT.

The protein belongs to the LpxK family.

It carries out the reaction a lipid A disaccharide + ATP = a lipid IVA + ADP + H(+). It participates in glycolipid biosynthesis; lipid IV(A) biosynthesis; lipid IV(A) from (3R)-3-hydroxytetradecanoyl-[acyl-carrier-protein] and UDP-N-acetyl-alpha-D-glucosamine: step 6/6. Its function is as follows. Transfers the gamma-phosphate of ATP to the 4'-position of a tetraacyldisaccharide 1-phosphate intermediate (termed DS-1-P) to form tetraacyldisaccharide 1,4'-bis-phosphate (lipid IVA). The sequence is that of Tetraacyldisaccharide 4'-kinase from Campylobacter jejuni (strain RM1221).